Here is a 170-residue protein sequence, read N- to C-terminus: NADH-quinone oxidoreductase subunit B (170 aa).

4 residues coordinate [4Fe-4S] cluster: Cys-42, Cys-43, Cys-107, and Cys-136.

The protein belongs to the complex I 20 kDa subunit family. NDH-1 is composed of 14 different subunits. Subunits NuoB, C, D, E, F, and G constitute the peripheral sector of the complex. [4Fe-4S] cluster serves as cofactor.

The protein localises to the cell inner membrane. It catalyses the reaction a quinone + NADH + 5 H(+)(in) = a quinol + NAD(+) + 4 H(+)(out). Its function is as follows. NDH-1 shuttles electrons from NADH, via FMN and iron-sulfur (Fe-S) centers, to quinones in the respiratory chain. The immediate electron acceptor for the enzyme in this species is believed to be ubiquinone. Couples the redox reaction to proton translocation (for every two electrons transferred, four hydrogen ions are translocated across the cytoplasmic membrane), and thus conserves the redox energy in a proton gradient. This is NADH-quinone oxidoreductase subunit B from Campylobacter concisus (strain 13826).